A 475-amino-acid chain; its full sequence is Na(+)/H(+) antiporter NhaA 2 (475 aa).

12 helical membrane-spanning segments follow: residues 44–64, 92–112, 130–150, 156–176, 186–206, 211–231, 232–252, 255–275, 331–351, 368–388, 406–426, and 442–462; these read AQATASVFLLVATITALWWAN, LKHIINDGLMVIFFFFIGLEI, LILCALGGMICPAVIYSLFNW, IGWGIPMATDTAFALGALTLV, AFLVGLAIVDDVGAIVVIALF, ISVIFLSISFSLIAFLAIANY, AGVLRPIFYILIGIAAWWTML, GVHPTFAGVAIALTVPARPML, ALDLPVSLFVLPLFALVNAGV, LGIVIGLVIGKFVGISGACWL, VIGMSLIAGIGFTMSTFIATL, and ILFASLLSAILGLLYLRIIAA.

The protein belongs to the NhaA Na(+)/H(+) (TC 2.A.33) antiporter family.

The protein resides in the cell inner membrane. The catalysed reaction is Na(+)(in) + 2 H(+)(out) = Na(+)(out) + 2 H(+)(in). Functionally, na(+)/H(+) antiporter that extrudes sodium in exchange for external protons. This chain is Na(+)/H(+) antiporter NhaA 2, found in Psychromonas ingrahamii (strain DSM 17664 / CCUG 51855 / 37).